Here is a 159-residue protein sequence, read N- to C-terminus: Cyclic pyranopterin monophosphate synthase (159 aa).

Substrate is bound by residues 76–78 (MCH) and 114–115 (ME). D129 is an active-site residue.

Belongs to the MoaC family. In terms of assembly, homohexamer; trimer of dimers.

It carries out the reaction (8S)-3',8-cyclo-7,8-dihydroguanosine 5'-triphosphate = cyclic pyranopterin phosphate + diphosphate. It functions in the pathway cofactor biosynthesis; molybdopterin biosynthesis. Its function is as follows. Catalyzes the conversion of (8S)-3',8-cyclo-7,8-dihydroguanosine 5'-triphosphate to cyclic pyranopterin monophosphate (cPMP). The polypeptide is Cyclic pyranopterin monophosphate synthase (Natranaerobius thermophilus (strain ATCC BAA-1301 / DSM 18059 / JW/NM-WN-LF)).